The chain runs to 208 residues: Small ribosomal subunit protein uS4 (208 aa).

Residues 95–157 (RRIDNVVYRA…DSLKKLVRSN (63 aa)) form the S4 RNA-binding domain.

It belongs to the universal ribosomal protein uS4 family. Part of the 30S ribosomal subunit. Contacts protein S5. The interaction surface between S4 and S5 is involved in control of translational fidelity.

One of the primary rRNA binding proteins, it binds directly to 16S rRNA where it nucleates assembly of the body of the 30S subunit. Its function is as follows. With S5 and S12 plays an important role in translational accuracy. This is Small ribosomal subunit protein uS4 from Borrelia hermsii (strain HS1 / DAH).